Reading from the N-terminus, the 175-residue chain is ATP synthase subunit b 1 (175 aa).

Residues 26 to 48 (IINLAIIIGVLYVYGSKFIGNIL) form a helical membrane-spanning segment.

The protein belongs to the ATPase B chain family. As to quaternary structure, F-type ATPases have 2 components, F(1) - the catalytic core - and F(0) - the membrane proton channel. F(1) has five subunits: alpha(3), beta(3), gamma(1), delta(1), epsilon(1). F(0) has four main subunits: a(1), b(1), b'(1) and c(10-14). The alpha and beta chains form an alternating ring which encloses part of the gamma chain. F(1) is attached to F(0) by a central stalk formed by the gamma and epsilon chains, while a peripheral stalk is formed by the delta, b and b' chains.

The protein resides in the cellular thylakoid membrane. Its function is as follows. F(1)F(0) ATP synthase produces ATP from ADP in the presence of a proton or sodium gradient. F-type ATPases consist of two structural domains, F(1) containing the extramembraneous catalytic core and F(0) containing the membrane proton channel, linked together by a central stalk and a peripheral stalk. During catalysis, ATP synthesis in the catalytic domain of F(1) is coupled via a rotary mechanism of the central stalk subunits to proton translocation. Component of the F(0) channel, it forms part of the peripheral stalk, linking F(1) to F(0). This Picosynechococcus sp. (strain ATCC 27264 / PCC 7002 / PR-6) (Agmenellum quadruplicatum) protein is ATP synthase subunit b 1.